A 347-amino-acid chain; its full sequence is GMP reductase (347 aa).

108–131 (ADFEKTKQILDLNPALNFVCIDVA) is an NADP(+) binding site. K(+) contacts are provided by Gly-181 and Gly-183. Catalysis depends on Cys-186, which acts as the Thioimidate intermediate. Residue 216–239 (IVSDGGCTTPGDVAKAFGGGADFV) coordinates NADP(+).

The protein belongs to the IMPDH/GMPR family. GuaC type 1 subfamily. In terms of assembly, homotetramer.

It catalyses the reaction IMP + NH4(+) + NADP(+) = GMP + NADPH + 2 H(+). Functionally, catalyzes the irreversible NADPH-dependent deamination of GMP to IMP. It functions in the conversion of nucleobase, nucleoside and nucleotide derivatives of G to A nucleotides, and in maintaining the intracellular balance of A and G nucleotides. The protein is GMP reductase of Escherichia coli O127:H6 (strain E2348/69 / EPEC).